The chain runs to 397 residues: Cercosporin biosynthesis regulatory protein CTB8 (397 aa).

The zn(2)-C6 fungal-type DNA-binding region spans 26–53; the sequence is CTHCSSQKIRCTKERPACARCVNKGLLC. 2 disordered regions span residues 62–92 and 173–198; these read GTRRHSVRATPEPETTISNAPTSSVPPDSVK and AEASTRPSSSSSPPSQRSDGGRATTH. A compositionally biased stretch (polar residues) spans 74 to 87; that stretch reads PETTISNAPTSSVP. Over residues 179–197 the composition is skewed to low complexity; that stretch reads PSSSSSPPSQRSDGGRATT.

Its subcellular location is the nucleus. Transcription regulator of the gene cluster that mediates the biosynthesis of cercosporin, a light-activated, non-host-selective toxin. The perylenequinone chromophore of cercosporin absorbs light energy to attain an electronically-activated triplet state and produces active oxygen species such as the hydroxyl radical, superoxide, hydrogen peroxide or singlet oxygen upon reaction with oxygen molecules. These reactive oxygen species cause damage to various cellular components including lipids, proteins and nucleic acids. This chain is Cercosporin biosynthesis regulatory protein CTB8, found in Cercospora nicotianae (Barn spot disease fungus).